The primary structure comprises 306 residues: UDP-N-acetylenolpyruvoylglucosamine reductase (306 aa).

Residues 30–216 (RIGGPVPYIL…KSKLIDFSTR (187 aa)) form the FAD-binding PCMH-type domain. Arginine 180 is a catalytic residue. Serine 230 functions as the Proton donor in the catalytic mechanism. Glutamate 301 is an active-site residue.

Belongs to the MurB family. Requires FAD as cofactor.

It localises to the cytoplasm. The catalysed reaction is UDP-N-acetyl-alpha-D-muramate + NADP(+) = UDP-N-acetyl-3-O-(1-carboxyvinyl)-alpha-D-glucosamine + NADPH + H(+). It participates in cell wall biogenesis; peptidoglycan biosynthesis. Functionally, cell wall formation. The polypeptide is UDP-N-acetylenolpyruvoylglucosamine reductase (Petrotoga mobilis (strain DSM 10674 / SJ95)).